A 101-amino-acid polypeptide reads, in one-letter code: Ribonuclease kappa-B (101 aa).

The next 2 membrane-spanning stretches (helical) occupy residues 13 to 33 and 68 to 88; these read ACGIVLSVWGVIMLVLLGVFF and VSYNCFIAAAIYIVLGGFSFC.

It belongs to the RNase K family.

The protein localises to the membrane. Endoribonuclease which preferentially cleaves ApU and ApG phosphodiester bonds. This Xenopus laevis (African clawed frog) protein is Ribonuclease kappa-B (rnasek-b).